The sequence spans 414 residues: Autophagy-related protein 18 (414 aa).

WD repeat units lie at residues 1–36 (MAMN…KSYE), 69–114 (KRQS…LLYT), 185–225 (AHRS…KLYQ), and 230–269 (SIPS…SSRE). Positions 226–230 (FRRGS) match the L/FRRG motif motif. Positions 261-314 (LSHQTSSREGSPSSALSRERAASQSSLGTSPDPDDPTDDMESSEIASRKHNGTL) are disordered. Positions 262 to 289 (SHQTSSREGSPSSALSRERAASQSSLGT) are enriched in polar residues. A compositionally biased stretch (acidic residues) spans 292–302 (DPDDPTDDMES). WD repeat units follow at residues 309–355 (KHNG…AWIK) and 367–407 (GNAG…GGEG).

The protein belongs to the WD repeat PROPPIN family. As to quaternary structure, component of the PI(3,5)P2 regulatory complex.

The protein localises to the preautophagosomal structure membrane. The protein resides in the vacuole membrane. It localises to the endosome membrane. Functionally, the PI(3,5)P2 regulatory complex regulates both the synthesis and turnover of phosphatidylinositol 3,5-bisphosphate (PtdIns(3,5)P2). Necessary for proper vacuole morphology. Plays an important role in osmotically-induced vacuole fragmentation. Required for cytoplasm to vacuole transport (Cvt) vesicle formation, pexophagy and starvation-induced autophagy. Involved in correct atg9 trafficking to the pre-autophagosomal structure. Might also be involved in premeiotic DNA replication. This Aspergillus terreus (strain NIH 2624 / FGSC A1156) protein is Autophagy-related protein 18 (atg18).